Reading from the N-terminus, the 352-residue chain is Phosphate acyltransferase (352 aa).

Belongs to the PlsX family. Homodimer. Probably interacts with PlsY.

It localises to the cytoplasm. The catalysed reaction is a fatty acyl-[ACP] + phosphate = an acyl phosphate + holo-[ACP]. Its pathway is lipid metabolism; phospholipid metabolism. In terms of biological role, catalyzes the reversible formation of acyl-phosphate (acyl-PO(4)) from acyl-[acyl-carrier-protein] (acyl-ACP). This enzyme utilizes acyl-ACP as fatty acyl donor, but not acyl-CoA. The chain is Phosphate acyltransferase from Bordetella bronchiseptica (strain ATCC BAA-588 / NCTC 13252 / RB50) (Alcaligenes bronchisepticus).